Consider the following 113-residue polypeptide: Hydrogenase maturation factor HypA (113 aa).

His2 contributes to the Ni(2+) binding site. Cys73, Cys76, Cys89, and Cys92 together coordinate Zn(2+).

The protein belongs to the HypA/HybF family.

In terms of biological role, involved in the maturation of [NiFe] hydrogenases. Required for nickel insertion into the metal center of the hydrogenase. This is Hydrogenase maturation factor HypA from Legionella pneumophila (strain Paris).